We begin with the raw amino-acid sequence, 274 residues long: Dermonecrotic toxin SdSicTox-betaIIB1bxii (274 aa).

His5 is an active-site residue. Residues Glu25 and Asp27 each coordinate Mg(2+). His41 acts as the Nucleophile in catalysis. Intrachain disulfides connect Cys45–Cys51 and Cys47–Cys190. Mg(2+) is bound at residue Asp85.

Belongs to the arthropod phospholipase D family. Class II subfamily. The cofactor is Mg(2+). In terms of tissue distribution, expressed by the venom gland.

Its subcellular location is the secreted. The enzyme catalyses an N-(acyl)-sphingosylphosphocholine = an N-(acyl)-sphingosyl-1,3-cyclic phosphate + choline. It carries out the reaction an N-(acyl)-sphingosylphosphoethanolamine = an N-(acyl)-sphingosyl-1,3-cyclic phosphate + ethanolamine. The catalysed reaction is a 1-acyl-sn-glycero-3-phosphocholine = a 1-acyl-sn-glycero-2,3-cyclic phosphate + choline. It catalyses the reaction a 1-acyl-sn-glycero-3-phosphoethanolamine = a 1-acyl-sn-glycero-2,3-cyclic phosphate + ethanolamine. Its function is as follows. Dermonecrotic toxins cleave the phosphodiester linkage between the phosphate and headgroup of certain phospholipids (sphingolipid and lysolipid substrates), forming an alcohol (often choline) and a cyclic phosphate. This toxin acts on sphingomyelin (SM). It may also act on ceramide phosphoethanolamine (CPE), lysophosphatidylcholine (LPC) and lysophosphatidylethanolamine (LPE), but not on lysophosphatidylserine (LPS), and lysophosphatidylglycerol (LPG). It acts by transphosphatidylation, releasing exclusively cyclic phosphate products as second products. Induces dermonecrosis, hemolysis, increased vascular permeability, edema, inflammatory response, and platelet aggregation. The protein is Dermonecrotic toxin SdSicTox-betaIIB1bxii of Sicarius cf. damarensis (strain GJB-2008) (Six-eyed sand spider).